The primary structure comprises 619 residues: Protein CPn_1016/CP_0837/CPj1016/CpB1054 (619 aa).

The tract at residues 591 to 619 (NAKKSEEQTSPQETPEVIRVSYPTTTSAL) is disordered.

The protein belongs to the chlamydial CPn_1016/CT_858/TC_0248 family.

The sequence is that of Protein CPn_1016/CP_0837/CPj1016/CpB1054 from Chlamydia pneumoniae (Chlamydophila pneumoniae).